A 741-amino-acid chain; its full sequence is 1,4-alpha-glucan branching enzyme GlgB (741 aa).

The active-site Nucleophile is aspartate 420. Glutamate 473 (proton donor) is an active-site residue.

This sequence belongs to the glycosyl hydrolase 13 family. GlgB subfamily. Monomer.

The catalysed reaction is Transfers a segment of a (1-&gt;4)-alpha-D-glucan chain to a primary hydroxy group in a similar glucan chain.. It participates in glycan biosynthesis; glycogen biosynthesis. Catalyzes the formation of the alpha-1,6-glucosidic linkages in glycogen by scission of a 1,4-alpha-linked oligosaccharide from growing alpha-1,4-glucan chains and the subsequent attachment of the oligosaccharide to the alpha-1,6 position. The polypeptide is 1,4-alpha-glucan branching enzyme GlgB (Pseudomonas syringae pv. syringae (strain B728a)).